The chain runs to 722 residues: Serine/threonine-protein kinase MARK2 (722 aa).

Residues 1–46 (MSSARTPLPTLNERDTEQPTLGHLDSKPSSKSNMLRGRNSATSADE) form a disordered region. Polar residues predominate over residues 27 to 45 (KPSSKSNMLRGRNSATSAD). Ser40 carries the phosphoserine modification. One can recognise a Protein kinase domain in the interval 53 to 304 (YRLLKTIGKG…LEQIMKDRWM (252 aa)). Thr58 is subject to Phosphothreonine; by autocatalysis. Residues 59–67 (IGKGNFAKV) and Lys82 each bind ATP. Phosphoserine; by CaMK1 occurs at positions 91, 92, and 93. The active-site Proton acceptor is Asp175. Thr208 carries the post-translational modification Phosphothreonine; by LKB1 and TAOK1. Residue Ser212 is modified to Phosphoserine; by GSK3-beta. Ser274 bears the Phosphoserine; by autocatalysis mark. Residue Thr275 is modified to Phosphothreonine; by autocatalysis. Thr294 carries the post-translational modification Phosphothreonine; by CaMK1. Positions 323 to 362 (YKDPRRTELMVSMGYTREEIQDSLVGQRYNEVMATYLLLG) constitute a UBA domain. Residues 373–576 (ITLKPRPSAD…SQGRRGASGS (204 aa)) form a disordered region. Residues Ser408 and Ser409 each carry the phosphoserine modification. A compositionally biased stretch (polar residues) spans 417–431 (PTSNSYSKKTQSNNA). A compositionally biased stretch (basic and acidic residues) spans 432–442 (ENKRPEEETGR). Ser453 is modified (phosphoserine). Thr464 is subject to Phosphothreonine. Residues 464–483 (TPTPSTNSVLSTSTNRSRNS) show a composition bias toward polar residues. Ser483 and Ser490 each carry phosphoserine. Residues 492-505 (GQASIQNGKDSTAP) are compositionally biased toward polar residues. Residues 511 to 524 (ASPSAHNISSSSGA) are compositionally biased toward low complexity. Residues Ser512, Ser514, and Ser535 each carry the phosphoserine modification. Thr539 bears the Phosphothreonine; by PKC/PRKCZ mark. Phosphoserine is present on residues Ser562 and Ser656. One can recognise a KA1 domain in the interval 673–722 (TPGHENFVQWEMEVCKLPRLSLNGVRFKRISGTSMAFKNIASKIANELKL).

Belongs to the protein kinase superfamily. CAMK Ser/Thr protein kinase family. SNF1 subfamily. As to quaternary structure, homodimer. Interacts (when phosphorylated at Thr-539) with YWHAZ. Interacts with MTCL1; the interaction is direct and increases MARK2 microtubule-binding ability. Interacts with PAK5; leading to inhibit the protein kinase activity. Interacts with MAPT/TAU. Interacts with YWHAB, YWHAG and YWHAQ. Mg(2+) serves as cofactor. In terms of processing, autophosphorylated. Phosphorylated at Thr-208 by STK11/LKB1 in complex with STE20-related adapter-alpha (STRADA) pseudo kinase and CAB39. Phosphorylation at Thr-208 by TAOK1 activates the kinase activity, leading to phosphorylation and detachment of MAPT/TAU from microtubules. Phosphorylation at Ser-212 by GSK3-beta (GSK3B) inhibits the kinase activity. Phosphorylation by CaMK1 promotes activity and is required to promote neurite outgrowth. Phosphorylation at Thr-539 by PRKCZ/aPKC in polarized epithelial cells inhibits the kinase activity and promotes binding to 14-3-3 protein YWHAZ, leading to relocation from cell membrane to cytoplasm.

It is found in the cell membrane. It localises to the lateral cell membrane. The protein localises to the cytoplasm. Its subcellular location is the cytoskeleton. The protein resides in the cell projection. It is found in the dendrite. The catalysed reaction is L-seryl-[protein] + ATP = O-phospho-L-seryl-[protein] + ADP + H(+). It carries out the reaction L-threonyl-[protein] + ATP = O-phospho-L-threonyl-[protein] + ADP + H(+). The enzyme catalyses L-seryl-[tau protein] + ATP = O-phospho-L-seryl-[tau protein] + ADP + H(+). It catalyses the reaction L-threonyl-[tau protein] + ATP = O-phospho-L-threonyl-[tau protein] + ADP + H(+). Inhibited by hymenialdisine. Activated by phosphorylation on Thr-208 by STK11/LKB1 and TAOK1. Inhibited by phosphorylation at Ser-212 or Thr-539. Inhibited by PAK5; inhibition is independent of the kinase activity of PAK5. Its function is as follows. Serine/threonine-protein kinase. Involved in cell polarity and microtubule dynamics regulation. Phosphorylates CRTC2/TORC2, DCX, HDAC7, KIF13B, MAP2, MAP4 and RAB11FIP2. Phosphorylates the microtubule-associated protein MAPT/TAU. Plays a key role in cell polarity by phosphorylating the microtubule-associated proteins MAP2, MAP4 and MAPT/TAU at KXGS motifs, causing detachment from microtubules, and their disassembly. Regulates epithelial cell polarity by phosphorylating RAB11FIP2. Involved in the regulation of neuronal migration through its dual activities in regulating cellular polarity and microtubule dynamics, possibly by phosphorylating and regulating DCX. Regulates axogenesis by phosphorylating KIF13B, promoting interaction between KIF13B and 14-3-3 and inhibiting microtubule-dependent accumulation of KIF13B. Also required for neurite outgrowth and establishment of neuronal polarity. Regulates localization and activity of some histone deacetylases by mediating phosphorylation of HDAC7, promoting subsequent interaction between HDAC7 and 14-3-3 and export from the nucleus. Also acts as a positive regulator of the Wnt signaling pathway, probably by mediating phosphorylation of dishevelled proteins (DVL1, DVL2 and/or DVL3). Modulates the developmental decision to build a columnar versus a hepatic epithelial cell apparently by promoting a switch from a direct to a transcytotic mode of apical protein delivery. Essential for the asymmetric development of membrane domains of polarized epithelial cells. The protein is Serine/threonine-protein kinase MARK2 of Rattus norvegicus (Rat).